The sequence spans 505 residues: Alpha-1-syntrophin (505 aa).

The segment at 1–77 (MASGRRAPRT…AEPGAASPPL (77 aa)) is disordered. PH domains lie at 6–269 (RAPR…AQVN) and 293–401 (DIKR…DGCH). A PDZ domain is found at 87 to 170 (RVTVRKADAG…EVVLEVKYMK (84 aa)). 5 positions are modified to phosphoserine: S101, S184, S189, S193, and S200. The interval 180–211 (ASGTSVGWDSPPASPLQRQPSSPGPPPRDLRD) is disordered. An SU domain is found at 449-505 (PFEKLQMSSDDGASLLFLDFGGAEGEIQLDLHSCPKTMVFIIHSFLSAKVTRLGLLA). A calmodulin-binding region spans residues 483-505 (PKTMVFIIHSFLSAKVTRLGLLA).

Belongs to the syntrophin family. As to quaternary structure, monomer and homodimer. Interacts with the dystrophin related protein DTNA; SGCG of the dystrophin glycoprotein complex; NOS1; GRB2; GA; TGFA; MAPK12 and the sodium channel proteins SCN4A and SCN5A. Interacts with the dystrophin protein DMD in a calmodulin dependent manner and with related protein UTRN; SGCA of the dystrophin glycoprotein complex; F-actin; calmodulin and with the other members of the syntrophin family SNTB1 and SNTB2. Interacts with MYOC; regulates muscle hypertrophy. Interacts with DTNB. Phosphorylated by CaM-kinase II. Phosphorylation may inhibit the interaction with DMD.

It localises to the cell membrane. It is found in the sarcolemma. The protein resides in the cell junction. The protein localises to the cytoplasm. Its subcellular location is the cytoskeleton. Its function is as follows. Adapter protein that binds to and probably organizes the subcellular localization of a variety of membrane proteins. May link various receptors to the actin cytoskeleton and the extracellular matrix via the dystrophin glycoprotein complex. Plays an important role in synapse formation and in the organization of UTRN and acetylcholine receptors at the neuromuscular synapse. Binds to phosphatidylinositol 4,5-bisphosphate. The chain is Alpha-1-syntrophin (SNTA1) from Bos taurus (Bovine).